The primary structure comprises 144 residues: Small ribosomal subunit protein uS12 (144 aa).

The segment at 1-55 (MPTINQLVRKGREDKVVKSKSPALQKGYNSFKKSQTNQSSPQKRGVCTRVGTMTP) is disordered. Polar residues predominate over residues 27 to 42 (GYNSFKKSQTNQSSPQ). A 3-methylthioaspartic acid modification is found at Asp102. The segment at 119–144 (GVNNRKQGRSKYGTKRPKPGQAAAKK) is disordered. Residues 124–144 (KQGRSKYGTKRPKPGQAAAKK) are compositionally biased toward basic residues.

It belongs to the universal ribosomal protein uS12 family. In terms of assembly, part of the 30S ribosomal subunit. Contacts proteins S8 and S17. May interact with IF1 in the 30S initiation complex.

Functionally, with S4 and S5 plays an important role in translational accuracy. In terms of biological role, interacts with and stabilizes bases of the 16S rRNA that are involved in tRNA selection in the A site and with the mRNA backbone. Located at the interface of the 30S and 50S subunits, it traverses the body of the 30S subunit contacting proteins on the other side and probably holding the rRNA structure together. The combined cluster of proteins S8, S12 and S17 appears to hold together the shoulder and platform of the 30S subunit. The sequence is that of Small ribosomal subunit protein uS12 from Brevibacillus brevis (strain 47 / JCM 6285 / NBRC 100599).